A 285-amino-acid chain; its full sequence is Polyamine aminopropyltransferase (285 aa).

The PABS domain maps to 5 to 241 (DTWFTEHFQT…GWWSVTLSSK (237 aa)). Q35 is a binding site for S-methyl-5'-thioadenosine. H66 and D90 together coordinate spermidine. Residues D110 and 141 to 142 (DG) contribute to the S-methyl-5'-thioadenosine site. The active-site Proton acceptor is the D160. 160 to 163 (DSTD) is a binding site for spermidine. P167 is an S-methyl-5'-thioadenosine binding site.

The protein belongs to the spermidine/spermine synthase family. Homodimer or homotetramer.

It is found in the cytoplasm. The enzyme catalyses S-adenosyl 3-(methylsulfanyl)propylamine + putrescine = S-methyl-5'-thioadenosine + spermidine + H(+). Its pathway is amine and polyamine biosynthesis; spermidine biosynthesis; spermidine from putrescine: step 1/1. Catalyzes the irreversible transfer of a propylamine group from the amino donor S-adenosylmethioninamine (decarboxy-AdoMet) to putrescine (1,4-diaminobutane) to yield spermidine. This Xylella fastidiosa (strain Temecula1 / ATCC 700964) protein is Polyamine aminopropyltransferase.